A 63-amino-acid polypeptide reads, in one-letter code: Large ribosomal subunit protein bL28 (63 aa).

The protein belongs to the bacterial ribosomal protein bL28 family.

The chain is Large ribosomal subunit protein bL28 from Clostridium perfringens (strain SM101 / Type A).